A 161-amino-acid chain; its full sequence is Endoribonuclease YbeY (161 aa).

Zn(2+) contacts are provided by histidine 120, histidine 124, and aspartate 130.

The protein belongs to the endoribonuclease YbeY family. The cofactor is Zn(2+).

It localises to the cytoplasm. Its function is as follows. Single strand-specific metallo-endoribonuclease involved in late-stage 70S ribosome quality control and in maturation of the 3' terminus of the 16S rRNA. The chain is Endoribonuclease YbeY from Chlamydia muridarum (strain MoPn / Nigg).